The primary structure comprises 498 residues: tRNA-2-methylthio-N(6)-dimethylallyladenosine synthase (498 aa).

Positions Pro2–Ile118 constitute an MTTase N-terminal domain. Positions 11, 47, 81, 163, 167, and 170 each coordinate [4Fe-4S] cluster. The region spanning Pro149 to Ala393 is the Radical SAM core domain. The region spanning Ser396–Glu467 is the TRAM domain. The interval Ala469 to Gly498 is disordered.

The protein belongs to the methylthiotransferase family. MiaB subfamily. As to quaternary structure, monomer. Requires [4Fe-4S] cluster as cofactor.

The protein localises to the cytoplasm. It carries out the reaction N(6)-dimethylallyladenosine(37) in tRNA + (sulfur carrier)-SH + AH2 + 2 S-adenosyl-L-methionine = 2-methylsulfanyl-N(6)-dimethylallyladenosine(37) in tRNA + (sulfur carrier)-H + 5'-deoxyadenosine + L-methionine + A + S-adenosyl-L-homocysteine + 2 H(+). Catalyzes the methylthiolation of N6-(dimethylallyl)adenosine (i(6)A), leading to the formation of 2-methylthio-N6-(dimethylallyl)adenosine (ms(2)i(6)A) at position 37 in tRNAs that read codons beginning with uridine. This chain is tRNA-2-methylthio-N(6)-dimethylallyladenosine synthase, found in Sorangium cellulosum (strain So ce56) (Polyangium cellulosum (strain So ce56)).